A 736-amino-acid polypeptide reads, in one-letter code: RNA-binding protein RMD9-like, mitochondrial (736 aa).

3 disordered regions span residues 1–28 (MFRF…KTNS), 124–148 (PRRS…HPNT), and 566–618 (NRGI…GTPV). The transit peptide at 1–79 (MFRFAQPANV…HFKNQFSSRN (79 aa)) directs the protein to the mitochondrion. The segment covering 125 to 140 (RRSNMRNNGNNNMNNG) has biased composition (low complexity). Polar residues predominate over residues 566-578 (NRGISSSSPMSAV). A compositionally biased stretch (low complexity) spans 579–596 (NSLAPSTTNTPSPSLSPI). The segment covering 602–613 (LSSARNTPNKIW) has biased composition (polar residues).

The protein belongs to the RMD9 family. In terms of assembly, monomer. Post-translationally, phosphorylated. Phosphorylation promotes binding to RNA.

The protein localises to the mitochondrion inner membrane. Its function is as follows. May be involved in the processing or stability of mitochondrial mRNAs. The chain is RNA-binding protein RMD9-like, mitochondrial from Candida glabrata (strain ATCC 2001 / BCRC 20586 / JCM 3761 / NBRC 0622 / NRRL Y-65 / CBS 138) (Yeast).